A 149-amino-acid chain; its full sequence is Cell division protein SepF (149 aa).

This sequence belongs to the SepF family. As to quaternary structure, homodimer. Interacts with FtsZ.

It localises to the cytoplasm. Functionally, cell division protein that is part of the divisome complex and is recruited early to the Z-ring. Probably stimulates Z-ring formation, perhaps through the cross-linking of FtsZ protofilaments. Its function overlaps with FtsA. The polypeptide is Cell division protein SepF (Clostridium perfringens (strain ATCC 13124 / DSM 756 / JCM 1290 / NCIMB 6125 / NCTC 8237 / Type A)).